Consider the following 330-residue polypeptide: Phosphate acyltransferase (330 aa).

This sequence belongs to the PlsX family. Homodimer. Probably interacts with PlsY.

The protein resides in the cytoplasm. It carries out the reaction a fatty acyl-[ACP] + phosphate = an acyl phosphate + holo-[ACP]. Its pathway is lipid metabolism; phospholipid metabolism. Its function is as follows. Catalyzes the reversible formation of acyl-phosphate (acyl-PO(4)) from acyl-[acyl-carrier-protein] (acyl-ACP). This enzyme utilizes acyl-ACP as fatty acyl donor, but not acyl-CoA. This is Phosphate acyltransferase from Streptococcus pneumoniae (strain ATCC 700669 / Spain 23F-1).